The following is a 234-amino-acid chain: tRNA (guanine-N(1)-)-methyltransferase (234 aa).

S-adenosyl-L-methionine-binding positions include glycine 115 and 135-140 (VGDYIL).

Belongs to the RNA methyltransferase TrmD family. As to quaternary structure, homodimer.

It is found in the cytoplasm. It catalyses the reaction guanosine(37) in tRNA + S-adenosyl-L-methionine = N(1)-methylguanosine(37) in tRNA + S-adenosyl-L-homocysteine + H(+). Functionally, specifically methylates guanosine-37 in various tRNAs. In Rickettsia africae (strain ESF-5), this protein is tRNA (guanine-N(1)-)-methyltransferase.